Reading from the N-terminus, the 117-residue chain is Large ribosomal subunit protein bL20c (117 aa).

Belongs to the bacterial ribosomal protein bL20 family.

Its subcellular location is the plastid. The protein localises to the chloroplast. Functionally, binds directly to 23S ribosomal RNA and is necessary for the in vitro assembly process of the 50S ribosomal subunit. It is not involved in the protein synthesizing functions of that subunit. The polypeptide is Large ribosomal subunit protein bL20c (Acorus calamus (Sweet flag)).